The primary structure comprises 281 residues: Shikimate dehydrogenase (NADP(+)) (281 aa).

Shikimate is bound by residues 14 to 16 (SRS) and Thr61. Catalysis depends on Lys65, which acts as the Proton acceptor. Residues Asn86 and Asp101 each contribute to the shikimate site. Residues 127 to 131 (GAGGA), 151 to 156 (NRTLAR), and Val216 contribute to the NADP(+) site. Residue Tyr218 coordinates shikimate. Gly239 contacts NADP(+).

It belongs to the shikimate dehydrogenase family. Homodimer.

It catalyses the reaction shikimate + NADP(+) = 3-dehydroshikimate + NADPH + H(+). It participates in metabolic intermediate biosynthesis; chorismate biosynthesis; chorismate from D-erythrose 4-phosphate and phosphoenolpyruvate: step 4/7. Functionally, involved in the biosynthesis of the chorismate, which leads to the biosynthesis of aromatic amino acids. Catalyzes the reversible NADPH linked reduction of 3-dehydroshikimate (DHSA) to yield shikimate (SA). In Azorhizobium caulinodans (strain ATCC 43989 / DSM 5975 / JCM 20966 / LMG 6465 / NBRC 14845 / NCIMB 13405 / ORS 571), this protein is Shikimate dehydrogenase (NADP(+)).